Here is a 252-residue protein sequence, read N- to C-terminus: Fructose-1,6-bisphosphatase/inositol-1-monophosphatase (252 aa).

Mg(2+) contacts are provided by D38, T40, E67, D82, L84, and D85. Substrate-binding positions include D85–T87, R167, A172, and R191. D200 serves as a coordination point for Mg(2+).

It belongs to the inositol monophosphatase superfamily. FBPase class 4 family. In terms of assembly, homodimer. It depends on Mg(2+) as a cofactor. Requires Mn(2+) as cofactor.

The catalysed reaction is beta-D-fructose 1,6-bisphosphate + H2O = beta-D-fructose 6-phosphate + phosphate. It catalyses the reaction a myo-inositol phosphate + H2O = myo-inositol + phosphate. Its activity is regulated as follows. Both FBPase and IMPase activities are inhibited by Ca(2+). In contrast to mammalian I-1-P phosphatases, is only very weakly inhibited by Li(+) (with an IC(50) of about 290 mM). In terms of biological role, phosphatase with broad specificity; it can dephosphorylate fructose 1,6-bisphosphate, both D and L isomers of inositol-1-phosphate (I-1-P), 2'-AMP, pNPP, inositol-2-phosphate, beta-glycerol phosphate, and alpha-D-glucose-1-phosphate. Cannot hydrolyze glucose-6-phosphate and fructose-6-phosphate. May be involved in the biosynthesis of a unique osmolyte, di-myo-inositol 1,1-phosphate. The polypeptide is Fructose-1,6-bisphosphatase/inositol-1-monophosphatase (suhB) (Archaeoglobus fulgidus (strain ATCC 49558 / DSM 4304 / JCM 9628 / NBRC 100126 / VC-16)).